A 356-amino-acid polypeptide reads, in one-letter code: S-adenosylmethionine:tRNA ribosyltransferase-isomerase (356 aa).

This sequence belongs to the QueA family. Monomer.

The protein resides in the cytoplasm. It carries out the reaction 7-aminomethyl-7-carbaguanosine(34) in tRNA + S-adenosyl-L-methionine = epoxyqueuosine(34) in tRNA + adenine + L-methionine + 2 H(+). It participates in tRNA modification; tRNA-queuosine biosynthesis. Functionally, transfers and isomerizes the ribose moiety from AdoMet to the 7-aminomethyl group of 7-deazaguanine (preQ1-tRNA) to give epoxyqueuosine (oQ-tRNA). This is S-adenosylmethionine:tRNA ribosyltransferase-isomerase from Ralstonia nicotianae (strain ATCC BAA-1114 / GMI1000) (Ralstonia solanacearum).